The sequence spans 208 residues: Adapter protein MecA (208 aa).

Belongs to the MecA family. In terms of assembly, homodimer.

Its function is as follows. Enables the recognition and targeting of unfolded and aggregated proteins to the ClpC protease or to other proteins involved in proteolysis. In Exiguobacterium sibiricum (strain DSM 17290 / CCUG 55495 / CIP 109462 / JCM 13490 / 255-15), this protein is Adapter protein MecA.